Here is a 179-residue protein sequence, read N- to C-terminus: Large ribosomal subunit protein uL5 (179 aa).

This sequence belongs to the universal ribosomal protein uL5 family. In terms of assembly, part of the 50S ribosomal subunit; part of the 5S rRNA/L5/L18/L25 subcomplex. Contacts the 5S rRNA and the P site tRNA. Forms a bridge to the 30S subunit in the 70S ribosome.

This is one of the proteins that bind and probably mediate the attachment of the 5S RNA into the large ribosomal subunit, where it forms part of the central protuberance. In the 70S ribosome it contacts protein S13 of the 30S subunit (bridge B1b), connecting the 2 subunits; this bridge is implicated in subunit movement. Contacts the P site tRNA; the 5S rRNA and some of its associated proteins might help stabilize positioning of ribosome-bound tRNAs. The polypeptide is Large ribosomal subunit protein uL5 (Histophilus somni (strain 129Pt) (Haemophilus somnus)).